The primary structure comprises 193 residues: MANLRTQKRLAASVLKCGKRKVWMDPNEISEISNANSRQNVRKLIKDGLVIRKPNLMHSRFRIRKTHAAKRLGRHTGYGKRKGTAEARMPSAVVWMRRQRVLRRLLRKYRESGKIDKHLYHTLYLEAKGNTFKHKRALIEHIQRAKAEANRTKLIQEQQDARRARAKAARQRRAKAVEEKREQLYTAAEKIEE.

A disordered region spans residues 156–179; that stretch reads QEQQDARRARAKAARQRRAKAVEE. Over residues 164 to 174 the composition is skewed to basic residues; that stretch reads ARAKAARQRRA.

Belongs to the eukaryotic ribosomal protein eL19 family. In terms of assembly, component of the large ribosomal subunit (LSU). Mature yeast ribosomes consist of a small (40S) and a large (60S) subunit. The 40S small subunit contains 1 molecule of ribosomal RNA (18S rRNA) and at least 33 different proteins. The large 60S subunit contains 3 rRNA molecules (25S, 5.8S and 5S rRNA) and at least 46 different proteins. eL19 lies in close proximity to the binding site for eukaryotic initiation factor eIF4G.

The protein localises to the cytoplasm. In terms of biological role, component of the ribosome, a large ribonucleoprotein complex responsible for the synthesis of proteins in the cell. The small ribosomal subunit (SSU) binds messenger RNAs (mRNAs) and translates the encoded message by selecting cognate aminoacyl-transfer RNA (tRNA) molecules. The large subunit (LSU) contains the ribosomal catalytic site termed the peptidyl transferase center (PTC), which catalyzes the formation of peptide bonds, thereby polymerizing the amino acids delivered by tRNAs into a polypeptide chain. The nascent polypeptides leave the ribosome through a tunnel in the LSU and interact with protein factors that function in enzymatic processing, targeting, and the membrane insertion of nascent chains at the exit of the ribosomal tunnel. eL19 may play a role in the last stages of translation initiation, in particular subunit joining and shedding/releasing factors. This Schizosaccharomyces pombe (strain 972 / ATCC 24843) (Fission yeast) protein is Large ribosomal subunit protein eL19A (rpl1901).